A 280-amino-acid polypeptide reads, in one-letter code: 3-methyl-2-oxobutanoate hydroxymethyltransferase (280 aa).

2 residues coordinate Mg(2+): aspartate 45 and aspartate 84. 3-methyl-2-oxobutanoate-binding positions include 45–46 (DS), aspartate 84, and lysine 114. Glutamate 116 serves as a coordination point for Mg(2+). Glutamate 183 (proton acceptor) is an active-site residue.

It belongs to the PanB family. As to quaternary structure, homodecamer; pentamer of dimers. Mg(2+) is required as a cofactor.

The protein localises to the cytoplasm. It catalyses the reaction 3-methyl-2-oxobutanoate + (6R)-5,10-methylene-5,6,7,8-tetrahydrofolate + H2O = 2-dehydropantoate + (6S)-5,6,7,8-tetrahydrofolate. It functions in the pathway cofactor biosynthesis; (R)-pantothenate biosynthesis; (R)-pantoate from 3-methyl-2-oxobutanoate: step 1/2. Catalyzes the reversible reaction in which hydroxymethyl group from 5,10-methylenetetrahydrofolate is transferred onto alpha-ketoisovalerate to form ketopantoate. The chain is 3-methyl-2-oxobutanoate hydroxymethyltransferase from Clostridium kluyveri (strain ATCC 8527 / DSM 555 / NBRC 12016 / NCIMB 10680 / K1).